The sequence spans 74 residues: Large ribosomal subunit protein uL29 (74 aa).

Belongs to the universal ribosomal protein uL29 family.

In Cyanothece sp. (strain PCC 7425 / ATCC 29141), this protein is Large ribosomal subunit protein uL29.